We begin with the raw amino-acid sequence, 300 residues long: FeMo cofactor biosynthesis protein NifB (300 aa).

The region spanning 24 to 266 (HDKVGRVHLP…PQFRACGQCR (243 aa)) is the Radical SAM core domain. [4Fe-4S] cluster-binding residues include C38, C42, and C45. G93, T144, and I196 together coordinate S-adenosyl-L-methionine. Positions 262 and 265 each coordinate [4Fe-4S] cluster.

Belongs to the radical SAM superfamily. NifB family. Monomer. [4Fe-4S] cluster serves as cofactor.

It participates in cofactor biosynthesis; Fe-Mo cofactor biosynthesis. Functionally, involved in the biosynthesis of the iron-molybdenum cofactor (FeMo-co or M-cluster) found in the dinitrogenase enzyme of the nitrogenase complex in nitrogen-fixing microorganisms. NifB catalyzes the crucial step of radical SAM-dependent carbide insertion that occurs concomitant with the insertion of a 9th sulfur and the rearrangement/coupling of two [4Fe-4S] clusters into a [8Fe-9S-C] cluster, the precursor to the M-cluster. In Methanocaldococcus jannaschii (strain ATCC 43067 / DSM 2661 / JAL-1 / JCM 10045 / NBRC 100440) (Methanococcus jannaschii), this protein is FeMo cofactor biosynthesis protein NifB.